We begin with the raw amino-acid sequence, 336 residues long: Potassium channel subfamily K member 1 (336 aa).

Residues 1–20 (MLQSLAGSSCVRLVERHRSA) lie on the Cytoplasmic side of the membrane. A helical membrane pass occupies residues 21–41 (WCFGFLVLGYLLYLVFGAVVF). Over 42-103 (SSVELPYEDL…SNASGNWNWD (62 aa)) the chain is Extracellular. N-linked (GlcNAc...) asparagine glycosylation is present at Asn95. Positions 104-116 (FTSALFFASTVLS) form an intramembrane region, helical. Residues 117 to 122 (TTGYGH) lie within the membrane without spanning it. Residues 117 to 122 (TTGYGH) are selectivity filter 1. The Extracellular segment spans residues 123–132 (TVPLSDGGKA). The helical transmembrane segment at 133-156 (FCIIYSVIGIPFTLLFLTAVVQRV) threads the bilayer. Over 157–181 (TIHVTRRPVLYFHVRWGFSKQAVAI) the chain is Cytoplasmic. Residues 182–202 (VHAVLLGVVTVSCFFFIPAAV) form a helical membrane-spanning segment. Residues 203-211 (FSVLEDDWN) lie on the Extracellular side of the membrane. Residues 212–224 (FLESFYFCFISLS) constitute an intramembrane region (helical). Positions 225 to 230 (TIGLGD) are selectivity filter 2. An intramembrane segment occupies 225–231 (TIGLGDY). Topologically, residues 232–243 (VPGEGYNQKFRE) are extracellular. The chain crosses the membrane as a helical span at residues 244 to 267 (LYKIGITCYLLLGLIAMLVVLETF). At 268–336 (CELHELKKFR…PALADGASDH (69 aa)) the chain is on the cytoplasmic side. Lys274 is covalently cross-linked (Glycyl lysine isopeptide (Lys-Gly) (interchain with G-Cter in SUMO)). The segment at 293–299 (IIEHDQL) is important for intracellular retention in recycling endosomes. The tract at residues 307 to 336 (QAAGVQEDQKQNEPFVSPQPPALADGASDH) is disordered.

This sequence belongs to the two pore domain potassium channel (TC 1.A.1.8) family. As to quaternary structure, homodimer; disulfide-linked. Heterodimer with KCNK2; disulfide-linked. In astrocytes, forms mostly heterodimeric potassium channels with KCNK2, with only a minor proportion of functional channels containing homodimeric KCNK1. Interacts with KCNK3 and KCNK9, forming functional heterodimeric channels. Interacts with GNG4. Identified in a complex with PSD and ARF6; interacts only with PSD that is bound to ARF6. Interacts with UBE2I. Post-translationally, sumoylation is controversial. Sumoylated by UBE2I. Not sumoylated when expressed in xenopus oocytes or mammalian cells. Sumoylation inactivates the channel, but does not interfere with expression at the cell membrane. Sumoylation of a single subunit is sufficient to silence the dimeric channel. Sumoylation of KCNK1 is sufficient to silence heterodimeric channels formed by KCNK1 and KCNK3 or KCNK9. Desumoylated by SENP1; this activates the channel. Desumoylated by SENP1; this strongly increases halothane-mediated activation of heterodimeric channels formed with KCNK9. SENP1 treatment has no effect.

It is found in the cell membrane. It localises to the recycling endosome. The protein resides in the synaptic cell membrane. Its subcellular location is the cytoplasmic vesicle. The protein localises to the perikaryon. It is found in the cell projection. It localises to the dendrite. The protein resides in the apical cell membrane. It catalyses the reaction K(+)(in) = K(+)(out). The catalysed reaction is NH4(+)(in) = NH4(+)(out). It carries out the reaction Na(+)(in) = Na(+)(out). The enzyme catalyses Rb(+)(in) = Rb(+)(out). It catalyses the reaction Cs(+)(in) = Cs(+)(out). The catalysed reaction is Li(+)(in) = Li(+)(out). It carries out the reaction L-glutamate(out) = L-glutamate(in). The enzyme catalyses chloride(in) = chloride(out). Functionally, ion channel that contributes to passive transmembrane potassium transport and to the regulation of the resting membrane potential in brain astrocytes, but also in kidney and in other tissues. Forms dimeric channels through which potassium ions pass in accordance with their electrochemical gradient. The channel is selective for K(+) ions at physiological potassium concentrations and at neutral pH, but becomes permeable to Na(+) at subphysiological K(+) levels and upon acidification of the extracellular medium. The homodimer has very low potassium channel activity, when expressed in heterologous systems, and can function as weakly inward rectifying potassium channel. Channel activity is modulated by activation of serotonin receptors. Heterodimeric channels containing KCNK1 and KCNK2 have much higher activity, and may represent the predominant form in astrocytes. Heterodimeric channels containing KCNK1 and KCNK3 or KCNK9 have much higher activity. Heterodimeric channels formed by KCNK1 and KCNK9 may contribute to halothane-sensitive currents. Mediates outward rectifying potassium currents in dentate gyrus granule cells and contributes to the regulation of their resting membrane potential. Contributes to the regulation of action potential firing in dentate gyrus granule cells and down-regulates their intrinsic excitability. In astrocytes, the heterodimer formed by KCNK1 and KCNK2 is required for rapid glutamate release in response to activation of G-protein coupled receptors, such as F2R and CNR1. Required for normal ion and water transport in the kidney. Contributes to the regulation of the resting membrane potential of pancreatic beta cells. The low channel activity of homodimeric KCNK1 may be due to sumoylation. The low channel activity may be due to rapid internalization from the cell membrane and retention in recycling endosomes. Permeable to monovalent cations with ion selectivity for K(+) &gt; Rb(+) &gt;&gt; NH4(+) &gt;&gt; Cs(+) = Na(+) = Li(+). The protein is Potassium channel subfamily K member 1 of Bos taurus (Bovine).